A 364-amino-acid polypeptide reads, in one-letter code: Aminomethyltransferase (364 aa).

The protein belongs to the GcvT family. As to quaternary structure, the glycine cleavage system is composed of four proteins: P, T, L and H.

The catalysed reaction is N(6)-[(R)-S(8)-aminomethyldihydrolipoyl]-L-lysyl-[protein] + (6S)-5,6,7,8-tetrahydrofolate = N(6)-[(R)-dihydrolipoyl]-L-lysyl-[protein] + (6R)-5,10-methylene-5,6,7,8-tetrahydrofolate + NH4(+). Functionally, the glycine cleavage system catalyzes the degradation of glycine. The polypeptide is Aminomethyltransferase (Shewanella halifaxensis (strain HAW-EB4)).